Reading from the N-terminus, the 226-residue chain is 7-cyano-7-deazaguanine synthase (226 aa).

ATP is bound at residue 10 to 20; the sequence is FSGGQDSTTLA. Residues C190, C205, C208, and C211 each coordinate Zn(2+).

Belongs to the QueC family. Zn(2+) is required as a cofactor.

The enzyme catalyses 7-carboxy-7-deazaguanine + NH4(+) + ATP = 7-cyano-7-deazaguanine + ADP + phosphate + H2O + H(+). The protein operates within purine metabolism; 7-cyano-7-deazaguanine biosynthesis. Functionally, catalyzes the ATP-dependent conversion of 7-carboxy-7-deazaguanine (CDG) to 7-cyano-7-deazaguanine (preQ(0)). The chain is 7-cyano-7-deazaguanine synthase from Helicobacter pylori (strain ATCC 700392 / 26695) (Campylobacter pylori).